We begin with the raw amino-acid sequence, 189 residues long: MARLKTVQSKVTKSPRRPFEKERLDQELKLIGTFGLKNKREVWRVKYTLAKVRKAARELLTLEDKDPKRLFEGNALLRRLVKIGVLDETKMKLDYVLGLKVEDFLERRLQTQVFKLGLAKSIHHARILIKQHHIRVRRQVVDVPSFIVRLDSQKHIDFSLQSPYGGGRPGRVKRRTLRKGDGAGGDDEE.

One can recognise an S4 RNA-binding domain in the interval 107 to 181 (RRLQTQVFKL…VKRRTLRKGD (75 aa)). The segment at 161-189 (QSPYGGGRPGRVKRRTLRKGDGAGGDDEE) is disordered.

Belongs to the universal ribosomal protein uS4 family. Component of the small ribosomal subunit. Part of the small subunit (SSU) processome, composed of more than 70 proteins and the RNA chaperone small nucleolar RNA (snoRNA) U3.

The protein resides in the cytoplasm. It is found in the nucleus. Its subcellular location is the nucleolus. Functionally, component of the small ribosomal subunit. The ribosome is a large ribonucleoprotein complex responsible for the synthesis of proteins in the cell. Part of the small subunit (SSU) processome, first precursor of the small eukaryotic ribosomal subunit. During the assembly of the SSU processome in the nucleolus, many ribosome biogenesis factors, an RNA chaperone and ribosomal proteins associate with the nascent pre-rRNA and work in concert to generate RNA folding, modifications, rearrangements and cleavage as well as targeted degradation of pre-ribosomal RNA by the RNA exosome. This chain is Small ribosomal subunit protein uS4 (rps-9), found in Caenorhabditis elegans.